A 190-amino-acid chain; its full sequence is Protein A52 (190 aa).

Belongs to the orthopoxvirus A52R protein family. In terms of assembly, interacts with host TRAF6 and IRAK2.

Bcl-2-like protein which targets host toll-like receptor signaling complexes to suppress innate immune response. Interacts with host TRAF6 to activate p38 and subsequently induce the expression of several cytokines such as IL-10. Also associates with host IRAK2 to inhibit NF-kappa-B signaling. This chain is Protein A52, found in Homo sapiens (Human).